Reading from the N-terminus, the 202-residue chain is Dephospho-CoA kinase (202 aa).

A DPCK domain is found at 5–202; that stretch reads VIGLTGGIGS…KKYLTLTKMV (198 aa). 13 to 18 is a binding site for ATP; that stretch reads GSGKTT.

The protein belongs to the CoaE family.

The protein resides in the cytoplasm. It carries out the reaction 3'-dephospho-CoA + ATP = ADP + CoA + H(+). It functions in the pathway cofactor biosynthesis; coenzyme A biosynthesis; CoA from (R)-pantothenate: step 5/5. Functionally, catalyzes the phosphorylation of the 3'-hydroxyl group of dephosphocoenzyme A to form coenzyme A. This is Dephospho-CoA kinase from Colwellia psychrerythraea (strain 34H / ATCC BAA-681) (Vibrio psychroerythus).